The sequence spans 301 residues: Homoserine kinase (301 aa).

Residue 86 to 96 coordinates ATP; sequence PLARGLGSSAT.

Belongs to the GHMP kinase family. Homoserine kinase subfamily.

The protein resides in the cytoplasm. The enzyme catalyses L-homoserine + ATP = O-phospho-L-homoserine + ADP + H(+). It participates in amino-acid biosynthesis; L-threonine biosynthesis; L-threonine from L-aspartate: step 4/5. Functionally, catalyzes the ATP-dependent phosphorylation of L-homoserine to L-homoserine phosphate. In Thermosynechococcus vestitus (strain NIES-2133 / IAM M-273 / BP-1), this protein is Homoserine kinase.